The primary structure comprises 215 residues: UPF0502 protein YceH (215 aa).

The protein belongs to the UPF0502 family.

The sequence is that of UPF0502 protein YceH from Salmonella heidelberg (strain SL476).